Consider the following 156-residue polypeptide: ATP synthase subunit b (156 aa).

Residues 1 to 21 (MNVTVTLIGQMVAFGILVWFV) form a helical membrane-spanning segment.

This sequence belongs to the ATPase B chain family. F-type ATPases have 2 components, F(1) - the catalytic core - and F(0) - the membrane proton channel. F(1) has five subunits: alpha(3), beta(3), gamma(1), delta(1), epsilon(1). F(0) has three main subunits: a(1), b(2) and c(10-14). The alpha and beta chains form an alternating ring which encloses part of the gamma chain. F(1) is attached to F(0) by a central stalk formed by the gamma and epsilon chains, while a peripheral stalk is formed by the delta and b chains.

The protein resides in the cell inner membrane. F(1)F(0) ATP synthase produces ATP from ADP in the presence of a proton or sodium gradient. F-type ATPases consist of two structural domains, F(1) containing the extramembraneous catalytic core and F(0) containing the membrane proton channel, linked together by a central stalk and a peripheral stalk. During catalysis, ATP synthesis in the catalytic domain of F(1) is coupled via a rotary mechanism of the central stalk subunits to proton translocation. In terms of biological role, component of the F(0) channel, it forms part of the peripheral stalk, linking F(1) to F(0). The protein is ATP synthase subunit b of Nitrosococcus oceani (strain ATCC 19707 / BCRC 17464 / JCM 30415 / NCIMB 11848 / C-107).